The sequence spans 68 residues: U-poneritoxin(01)-Om4a (68 aa).

Residues 1-25 (MKPSSLTLAFLVVFMMAIMYNSVQA) form the signal peptide. Positions 26-39 (EALADADAEAFAEA) are excised as a propeptide.

The protein belongs to the formicidae venom precursor-01 superfamily. In terms of assembly, homo- or heterodimer with PLP7 (AC A0A348G6I9); disulfide-linked. Post-translationally, truncated sequences of this peptide have also been found in the venom. It is possible they have been cleaved in the venom. Expressed by the venom gland.

Its subcellular location is the secreted. Functionally, this homodimer composed of two cationic amphipathic alpha-helical peptides has antimicrobial activities against E.coli (MIC=3.1 uM), S.aureus (MIC=3.1 uM), and S.cerevisiae (MIC=3.1 uM). It also shows histamine-releasing activity (66.4% at 10 uM) and a weak hemolytic activity (10.5% at 50 uM). This chain is U-poneritoxin(01)-Om4a, found in Odontomachus monticola (Trap-jaw ant).